Reading from the N-terminus, the 981-residue chain is Ubiquitin carboxyl-terminal hydrolase 15 (981 aa).

Ala-2 carries the post-translational modification N-acetylalanine. The tract at residues 2 to 223 (AEGGAADLDT…KNEDGTWPRG (222 aa)) is mediates interaction with SART3. The region spanning 7 to 118 (ADLDTQRSDI…GQEPIARKVV (112 aa)) is the DUSP domain. A disordered region spans residues 216–237 (EDGTWPRGPSTPKSPGASNFST). At Thr-226 the chain carries Phosphothreonine. Positions 226–237 (TPKSPGASNFST) are enriched in polar residues. Phosphoserine occurs at positions 229 and 242. The region spanning 289–933 (CGLSNLGNTC…AAYVLFYQRQ (645 aa)) is the USP domain. The Nucleophile role is filled by Cys-298. Thr-602 is modified (phosphothreonine). Positions 633-694 (CCEDQNINGN…GGDNDSENGL (62 aa)) are disordered. Residues 656-673 (METDEPDDESSQDQELPS) show a composition bias toward acidic residues. His-891 serves as the catalytic Proton acceptor. The interval 952–981 (SAATGIPLESDEDSNDNDNDLENENCMHTN) is disordered. The segment covering 960 to 974 (ESDEDSNDNDNDLEN) has biased composition (acidic residues). A phosphoserine mark is found at Ser-961 and Ser-965.

The protein belongs to the peptidase C19 family. A homodimer structure has been reported; however it is unclear whether the protein form a homodimer in vivo. Identified in a complex with the COP9 signalosome complex (CSN). Interacts with SMAD1, SMAD2 and SMAD3; the interaction is direct. Forms a complex with SMURF2 and SMAD7. Interacts with TGFBR1. Interacts with SART3; the interaction is direct. May interact with RNF20 and RNF40. May interact with PRKN. Interacts with INCA1. In terms of processing, phosphorylated. Phosphorylation protects against ubiquitination and subsequent degradation by the proteasome. Post-translationally, ubiquitinated, leading to degradation by the proteasome. As to expression, widely expressed with highest levels in the brain and spleen, and lowest levels in the muscles (at protein level). In the midbrain, strong expression in neurons including the dopaminergic neurons (at protein level). Widely expressed with highest levels in testis, heart and liver.

The protein localises to the cytoplasm. It localises to the nucleus. Its subcellular location is the mitochondrion. The enzyme catalyses Thiol-dependent hydrolysis of ester, thioester, amide, peptide and isopeptide bonds formed by the C-terminal Gly of ubiquitin (a 76-residue protein attached to proteins as an intracellular targeting signal).. In terms of biological role, hydrolase that removes conjugated ubiquitin from target proteins and regulates various pathways such as the TGF-beta receptor signaling, NF-kappa-B and RNF41/NRDP1-PRKN pathways. Acts as a key regulator of TGF-beta receptor signaling pathway, but the precise mechanism is still unclear: according to a report, acts by promoting deubiquitination of monoubiquitinated R-SMADs (SMAD1, SMAD2 and/or SMAD3), thereby alleviating inhibition of R-SMADs and promoting activation of TGF-beta target genes. According to another reports, regulates the TGF-beta receptor signaling pathway by mediating deubiquitination and stabilization of TGFBR1, leading to an enhanced TGF-beta signal. Able to mediate deubiquitination of monoubiquitinated substrates, 'Lys-27'-, 'Lys-48'- and 'Lys-63'-linked polyubiquitin chains. May also regulate gene expression and/or DNA repair through the deubiquitination of histone H2B. Acts as an inhibitor of mitophagy by counteracting the action of parkin (PRKN): hydrolyzes cleavage of 'Lys-48'- and 'Lys-63'-linked polyubiquitin chains attached by parkin on target proteins such as MFN2, thereby reducing parkin's ability to drive mitophagy. Acts as an associated component of COP9 signalosome complex (CSN) and regulates different pathways via this association: regulates NF-kappa-B by mediating deubiquitination of NFKBIA and deubiquitinates substrates bound to VCP. Involved in endosome organization by mediating deubiquitination of SQSTM1: ubiquitinated SQSTM1 forms a molecular bridge that restrains cognate vesicles in the perinuclear region and its deubiquitination releases target vesicles for fast transport into the cell periphery. Acts as a negative regulator of antifungal immunity by mediating 'Lys-27'-linked deubiquitination of CARD9, thereby inactivating CARD9. The chain is Ubiquitin carboxyl-terminal hydrolase 15 (Usp15) from Mus musculus (Mouse).